A 465-amino-acid chain; its full sequence is CUGBP Elav-like family member 3 (465 aa).

2 consecutive RRM domains span residues 7–88 (IKLF…PADS) and 95–174 (KLFV…FADT). Disordered stretches follow at residues 283-311 (PVPTQPTGQPAPDALYPNGVHPYPAQSPA) and 345-379 (PPALVAQQPPPPPQQQQQQQQQQQQQQQQREGPDG). The segment covering 345–358 (PPALVAQQPPPPPQ) has biased composition (pro residues). Over residues 359–373 (QQQQQQQQQQQQQQQ) the composition is skewed to low complexity. The RRM 3 domain occupies 380-458 (CNIFIYHLPQ…KRLKVQLKRP (79 aa)).

The protein belongs to the CELF/BRUNOL family.

The protein resides in the nucleus. It localises to the cytoplasm. RNA-binding protein involved in the regulation of pre-mRNA alternative splicing. Mediates exon inclusion and/or exclusion in pre-mRNA that are subject to tissue-specific and developmentally regulated alternative splicing. Specifically activates exon 5 inclusion of cardiac isoforms of TNNT2 during heart remodeling at the juvenile to adult transition. Activates the splicing of MAPT/Tau exon 10. Binds to muscle-specific splicing enhancer (MSE) intronic sites flanking the alternative exon 5 of TNNT2 pre-mRNA. The sequence is that of CUGBP Elav-like family member 3 (Celf3) from Mus musculus (Mouse).